The sequence spans 368 residues: PPE family immunomodulator PPE68 (368 aa).

Disordered stretches follow at residues L255–A280 and A312–W368. Over residues A312–A327 the composition is skewed to low complexity. Positions R354 to W368 are enriched in acidic residues.

The protein belongs to the mycobacterial PPE family. As to quaternary structure, homodimer. Interacts with PE35. PE35/PPE68 complex interacts with human TLR2.

The protein localises to the secreted. It localises to the cell wall. It is found in the cell membrane. Its subcellular location is the cell surface. Functionally, plays a major role in RD1-associated pathogenesis, and may contribute to the establishment and maintenance of M.tuberculosis infection. Together with PE35, stimulates the secretion of IL-10 and MCP-1 from human macrophages, via the interaction with human Toll-like receptor 2 (TLR2). This Mycobacterium tuberculosis (strain CDC 1551 / Oshkosh) protein is PPE family immunomodulator PPE68 (PPE68).